The following is a 355-amino-acid chain: Gibberellin 3-beta-dioxygenase 4 (355 aa).

The 101-residue stretch at 203–303 (GRGAIRLNHY…RISIAYLWGG (101 aa)) folds into the Fe2OG dioxygenase domain. Fe cation is bound by residues histidine 227, aspartate 229, and histidine 284. The active site involves arginine 294.

This sequence belongs to the iron/ascorbate-dependent oxidoreductase family. GA3OX subfamily. It depends on L-ascorbate as a cofactor. Requires Fe cation as cofactor. As to expression, expressed in siliques and in seeds, specifically at the rim of the embryo and the outer integument. Also expressed in flowers. Not detected in roots, stems and leaves.

The enzyme catalyses gibberellin A20 + 2-oxoglutarate + O2 = gibberellin A1 + succinate + CO2. It functions in the pathway plant hormone biosynthesis; gibberellin biosynthesis. Functionally, converts the inactive gibberellin (GA) precursors GA9 and GA20 in the bioactives gibberellins GA4 and GA1. Involved in the production of bioactive GA for reproductive development. This Arabidopsis thaliana (Mouse-ear cress) protein is Gibberellin 3-beta-dioxygenase 4.